Consider the following 184-residue polypeptide: MAKYDKADLERRMHGAVESLKHDLAGLRTGRANAALLDPVTVEVYGSQMPLNQIASISVPEPRMLSVQVWDKANVGPVDKAIRSAGLGLNPIVDGQMLRLPIPEMTQERRKELSKLAGQYAEKARVAVRNVRRDGMDNLKQDENKKEISEDERKRHETEVQKLTDATIAEIDAAATAKEKEILG.

Basic and acidic residues predominate over residues 133-162 (RDGMDNLKQDENKKEISEDERKRHETEVQK). Positions 133-163 (RDGMDNLKQDENKKEISEDERKRHETEVQKL) are disordered.

It belongs to the RRF family.

It is found in the cytoplasm. Responsible for the release of ribosomes from messenger RNA at the termination of protein biosynthesis. May increase the efficiency of translation by recycling ribosomes from one round of translation to another. In Sphingopyxis alaskensis (strain DSM 13593 / LMG 18877 / RB2256) (Sphingomonas alaskensis), this protein is Ribosome-recycling factor.